The sequence spans 370 residues: Polyadenylate-binding protein 4-like (370 aa).

RRM domains follow at residues 10–88 (ASLY…WSQR), 98–174 (GNVF…RFKN), 190–267 (TNVY…RAQK), and 293–369 (VKLY…LAQR).

It belongs to the polyadenylate-binding protein type-1 family.

Functionally, may bind RNA. The polypeptide is Polyadenylate-binding protein 4-like (PABPC4L) (Homo sapiens (Human)).